Consider the following 501-residue polypeptide: Membrane-bound lytic murein transglycosylase F (501 aa).

An N-terminal signal peptide occupies residues 1-29 (MTKILLNTASTVLTRLWKLSLLGLVFAVA). The segment at 30–274 (AATLVSSRIP…DAMETFYGHL (245 aa)) is non-LT domain. The LT domain stretch occupies residues 275 to 501 (GEIDYSGAIL…VKSISGTSSL (227 aa)). E321 is an active-site residue.

This sequence in the N-terminal section; belongs to the bacterial solute-binding protein 3 family. It in the C-terminal section; belongs to the transglycosylase Slt family.

It is found in the cell outer membrane. It catalyses the reaction Exolytic cleavage of the (1-&gt;4)-beta-glycosidic linkage between N-acetylmuramic acid (MurNAc) and N-acetylglucosamine (GlcNAc) residues in peptidoglycan, from either the reducing or the non-reducing ends of the peptidoglycan chains, with concomitant formation of a 1,6-anhydrobond in the MurNAc residue.. Its function is as follows. Murein-degrading enzyme that degrades murein glycan strands and insoluble, high-molecular weight murein sacculi, with the concomitant formation of a 1,6-anhydromuramoyl product. Lytic transglycosylases (LTs) play an integral role in the metabolism of the peptidoglycan (PG) sacculus. Their lytic action creates space within the PG sacculus to allow for its expansion as well as for the insertion of various structures such as secretion systems and flagella. The protein is Membrane-bound lytic murein transglycosylase F of Saccharophagus degradans (strain 2-40 / ATCC 43961 / DSM 17024).